The following is a 142-amino-acid chain: uncharacterized protein (142 aa).

The region spanning 18-137 is the Peptidase C39 domain; sequence QSSGYSCGPA…KIFTGNVLVV (120 aa).

This is an uncharacterized protein from Methanothermobacter marburgensis (strain ATCC BAA-927 / DSM 2133 / JCM 14651 / NBRC 100331 / OCM 82 / Marburg) (Methanobacterium thermoautotrophicum).